The primary structure comprises 200 residues: Putative 3-methyladenine DNA glycosylase (200 aa).

The protein belongs to the DNA glycosylase MPG family.

The sequence is that of Putative 3-methyladenine DNA glycosylase from Shouchella clausii (strain KSM-K16) (Alkalihalobacillus clausii).